We begin with the raw amino-acid sequence, 553 residues long: Dihydroxy-acid dehydratase (553 aa).

Position 49 (Cys49) interacts with [2Fe-2S] cluster. Residue Asp81 participates in Mg(2+) binding. Residue Cys122 participates in [2Fe-2S] cluster binding. Mg(2+)-binding residues include Asp123 and Lys124. An N6-carboxylysine modification is found at Lys124. Residue Cys194 participates in [2Fe-2S] cluster binding. Glu444 is a Mg(2+) binding site. Ser470 acts as the Proton acceptor in catalysis.

Belongs to the IlvD/Edd family. In terms of assembly, homodimer. [2Fe-2S] cluster serves as cofactor. It depends on Mg(2+) as a cofactor.

The enzyme catalyses (2R)-2,3-dihydroxy-3-methylbutanoate = 3-methyl-2-oxobutanoate + H2O. It catalyses the reaction (2R,3R)-2,3-dihydroxy-3-methylpentanoate = (S)-3-methyl-2-oxopentanoate + H2O. Its pathway is amino-acid biosynthesis; L-isoleucine biosynthesis; L-isoleucine from 2-oxobutanoate: step 3/4. It participates in amino-acid biosynthesis; L-valine biosynthesis; L-valine from pyruvate: step 3/4. Functionally, functions in the biosynthesis of branched-chain amino acids. Catalyzes the dehydration of (2R,3R)-2,3-dihydroxy-3-methylpentanoate (2,3-dihydroxy-3-methylvalerate) into 2-oxo-3-methylpentanoate (2-oxo-3-methylvalerate) and of (2R)-2,3-dihydroxy-3-methylbutanoate (2,3-dihydroxyisovalerate) into 2-oxo-3-methylbutanoate (2-oxoisovalerate), the penultimate precursor to L-isoleucine and L-valine, respectively. The protein is Dihydroxy-acid dehydratase of Aeropyrum pernix (strain ATCC 700893 / DSM 11879 / JCM 9820 / NBRC 100138 / K1).